We begin with the raw amino-acid sequence, 235 residues long: DNA repair protein RecO (235 aa).

Belongs to the RecO family.

Functionally, involved in DNA repair and RecF pathway recombination. The protein is DNA repair protein RecO of Enterobacter sp. (strain 638).